The primary structure comprises 250 residues: tRNA pseudouridine synthase A (250 aa).

Asp-52 functions as the Nucleophile in the catalytic mechanism. Residue Tyr-111 coordinates substrate.

The protein belongs to the tRNA pseudouridine synthase TruA family. In terms of assembly, homodimer.

It carries out the reaction uridine(38/39/40) in tRNA = pseudouridine(38/39/40) in tRNA. In terms of biological role, formation of pseudouridine at positions 38, 39 and 40 in the anticodon stem and loop of transfer RNAs. The protein is tRNA pseudouridine synthase A of Methylorubrum extorquens (strain CM4 / NCIMB 13688) (Methylobacterium extorquens).